A 914-amino-acid polypeptide reads, in one-letter code: Alanine--tRNA ligase (914 aa).

Residues His-608, His-612, Cys-711, and His-715 each contribute to the Zn(2+) site.

It belongs to the class-II aminoacyl-tRNA synthetase family. Zn(2+) serves as cofactor.

The protein localises to the cytoplasm. It carries out the reaction tRNA(Ala) + L-alanine + ATP = L-alanyl-tRNA(Ala) + AMP + diphosphate. Its function is as follows. Catalyzes the attachment of alanine to tRNA(Ala) in a two-step reaction: alanine is first activated by ATP to form Ala-AMP and then transferred to the acceptor end of tRNA(Ala). Also edits incorrectly charged Ser-tRNA(Ala) and Gly-tRNA(Ala) via its editing domain. This chain is Alanine--tRNA ligase, found in Methanoregula boonei (strain DSM 21154 / JCM 14090 / 6A8).